The following is a 239-amino-acid chain: Phosphoglycolate phosphatase (239 aa).

Catalysis depends on aspartate 9, which acts as the Nucleophile. Mg(2+)-binding residues include aspartate 9 and aspartate 11. Lysine 157 lines the substrate pocket. Residues aspartate 180 and aspartate 184 each contribute to the Mg(2+) site.

Belongs to the archaeal SPP-like hydrolase family. The cofactor is Mg(2+).

It carries out the reaction 2-phosphoglycolate + H2O = glycolate + phosphate. Catalyzes the dephosphorylation of 2-phosphoglycolate. The protein is Phosphoglycolate phosphatase of Thermococcus kodakarensis (strain ATCC BAA-918 / JCM 12380 / KOD1) (Pyrococcus kodakaraensis (strain KOD1)).